The chain runs to 387 residues: 4-hydroxy-3-methylbut-2-en-1-yl diphosphate synthase (flavodoxin) (387 aa).

Residues Cys-293, Cys-296, Cys-328, and Glu-335 each contribute to the [4Fe-4S] cluster site.

It belongs to the IspG family. [4Fe-4S] cluster is required as a cofactor.

The enzyme catalyses (2E)-4-hydroxy-3-methylbut-2-enyl diphosphate + oxidized [flavodoxin] + H2O + 2 H(+) = 2-C-methyl-D-erythritol 2,4-cyclic diphosphate + reduced [flavodoxin]. It functions in the pathway isoprenoid biosynthesis; isopentenyl diphosphate biosynthesis via DXP pathway; isopentenyl diphosphate from 1-deoxy-D-xylulose 5-phosphate: step 5/6. Its function is as follows. Converts 2C-methyl-D-erythritol 2,4-cyclodiphosphate (ME-2,4cPP) into 1-hydroxy-2-methyl-2-(E)-butenyl 4-diphosphate. This Treponema denticola (strain ATCC 35405 / DSM 14222 / CIP 103919 / JCM 8153 / KCTC 15104) protein is 4-hydroxy-3-methylbut-2-en-1-yl diphosphate synthase (flavodoxin).